The sequence spans 180 residues: UPF0227 protein YE1706 (180 aa).

The protein belongs to the UPF0227 family.

This Yersinia enterocolitica serotype O:8 / biotype 1B (strain NCTC 13174 / 8081) protein is UPF0227 protein YE1706.